The sequence spans 1098 residues: Bifunctional helicase and thymine dioxygenase JBP2 (1098 aa).

A thymine dioxygenase region spans residues 1–540 (MLNGLTRVST…PPLFVPTRLA (540 aa)). Positions 415, 417, and 465 each coordinate Fe cation. A 2-oxoglutarate-binding site is contributed by R479. The segment at 541-1098 (SHLAPVQLAA…RYQESVRESE (558 aa)) is DNA Helicase. The region spanning 555–730 (VERTEKQSGC…YRLVGWVNKG (176 aa)) is the Helicase ATP-binding domain. Position 568 to 575 (568 to 575 (MTMGLGKT)) interacts with ATP. A DEAH box motif is present at residues 681-684 (DEGH). Positions 897–1057 (VLVDIVLRVQ…ALPDELEDCA (161 aa)) constitute a Helicase C-terminal domain.

This sequence in the C-terminal section; belongs to the SNF2/RAD54 helicase family. The protein in the N-terminal section; belongs to the TET family. JBP2 subfamily. Fe(2+) serves as cofactor.

The protein localises to the nucleus. The catalysed reaction is ATP + H2O = ADP + phosphate + H(+). It catalyses the reaction thymine + 2-oxoglutarate + O2 = 5-hydroxymethyluracil + succinate + CO2. In terms of biological role, dioxygenase that catalyzes the first step of DNA base J (beta-d-glucosyl-HOMedU) biosynthesis by converting thymine to 5-hydroxymethyluracil (HOMedU). DNA base J is a hypermodified thymidine residue found in the genome of kinetoplastid parasites, which is localized primarily to repetitive DNA, namely the telomeres, and is implicated in the regulation of antigenic variation. Probably also acts as a DNA helicase. Recognizes and binds specific regions of the genome, hydrolyzes ATP and allows the DNA base J de novo synthesis. Involved in initial synthesis of DNA base J, JBP1 being able to act via the basal level of DNA base J and propagate further synthesis. In contrast to JBP1, it does not specifically bind DNA base J, however it binds chromatin. The polypeptide is Bifunctional helicase and thymine dioxygenase JBP2 (JBP2) (Leishmania infantum).